The chain runs to 83 residues: Short neurotoxin II (83 aa).

The N-terminal stretch at 1 to 21 (MKTLLLTLVVVTVVCLDLGYT) is a signal peptide. 4 disulfide bridges follow: Cys24–Cys45, Cys38–Cys62, Cys64–Cys75, and Cys76–Cys81.

The protein belongs to the three-finger toxin family. Short-chain subfamily. Type I alpha-neurotoxin sub-subfamily. Expressed by the venom gland.

It is found in the secreted. Its function is as follows. Binds to muscle nicotinic acetylcholine receptor (nAChR) and inhibit acetylcholine from binding to the receptor, thereby impairing neuromuscular transmission. The polypeptide is Short neurotoxin II (Laticauda colubrina (Yellow-lipped sea krait)).